The sequence spans 406 residues: Lymphocyte transmembrane adapter 1 (406 aa).

Positions 1–25 (MYTTPAPPEITRRSSEPSTQQGTLG) are disordered. At 1-33 (MYTTPAPPEITRRSSEPSTQQGTLGSLEGEKGH) the chain is on the extracellular side. The chain crosses the membrane as a helical; Signal-anchor for type III membrane protein span at residues 34 to 54 (LLFPGFVVLVTIFLVVIVTCI). Residues 55–406 (LWSRKKQKKR…LATETSGEEV (352 aa)) lie on the Cytoplasmic side of the membrane. Residues 109–131 (ESLLSRASDSPEPEVPQASGSLQ) form a disordered region. A Phosphotyrosine modification is found at Tyr184. The segment at 219–258 (AEGGHAGCGKATDRTGVWAPGLQGSNSLSEGDDSSQSSND) is disordered. Positions 242–258 (GSNSLSEGDDSSQSSND) are enriched in low complexity. Residues Tyr259, Tyr285, and Tyr352 each carry the phosphotyrosine modification. The segment at 358–406 (PELEGKDWKQGPGTWHPSDERTPSDQAGKFCEAVYPAGSLATETSGEEV) is disordered.

When phosphorylated, interacts with GRB2, PIK3R1 and GRAP2. Post-translationally, phosphorylated on tyrosines upon TCR or BCR activation; which leads to the recruitment of GRB2, PIK3R1 and GRAP2.

It localises to the cell membrane. Functionally, negatively regulates TCR (T-cell antigen receptor)-mediated signaling in T-cells and BCR (B-cell antigen receptor)-mediated signaling in B-cells. The polypeptide is Lymphocyte transmembrane adapter 1 (Lax1) (Rattus norvegicus (Rat)).